The following is a 566-amino-acid chain: uncharacterized protein (566 aa).

It belongs to the protein kinase superfamily. ADCK protein kinase family.

This is an uncharacterized protein from Synechocystis sp. (strain ATCC 27184 / PCC 6803 / Kazusa).